Reading from the N-terminus, the 430-residue chain is Enolase (430 aa).

A (2R)-2-phosphoglycerate-binding site is contributed by Gln164. The active-site Proton donor is Glu208. Mg(2+) is bound by residues Asp245, Glu288, and Asp315. (2R)-2-phosphoglycerate-binding residues include Lys340, Arg369, Ser370, and Lys391. The Proton acceptor role is filled by Lys340.

It belongs to the enolase family. Mg(2+) is required as a cofactor.

Its subcellular location is the cytoplasm. The protein resides in the secreted. It localises to the cell surface. It catalyses the reaction (2R)-2-phosphoglycerate = phosphoenolpyruvate + H2O. The protein operates within carbohydrate degradation; glycolysis; pyruvate from D-glyceraldehyde 3-phosphate: step 4/5. Functionally, catalyzes the reversible conversion of 2-phosphoglycerate (2-PG) into phosphoenolpyruvate (PEP). It is essential for the degradation of carbohydrates via glycolysis. In Thermococcus kodakarensis (strain ATCC BAA-918 / JCM 12380 / KOD1) (Pyrococcus kodakaraensis (strain KOD1)), this protein is Enolase.